A 249-amino-acid polypeptide reads, in one-letter code: Vitamin B12 import ATP-binding protein BtuD (249 aa).

Residues 5 to 233 (MQLQDVAETT…PNLAQAYGMN (229 aa)) enclose the ABC transporter domain. 33–40 (GPNGAGKS) contributes to the ATP binding site.

It belongs to the ABC transporter superfamily. Vitamin B12 importer (TC 3.A.1.13.1) family. The complex is composed of two ATP-binding proteins (BtuD), two transmembrane proteins (BtuC) and a solute-binding protein (BtuF).

The protein resides in the cell inner membrane. It catalyses the reaction an R-cob(III)alamin(out) + ATP + H2O = an R-cob(III)alamin(in) + ADP + phosphate + H(+). Part of the ABC transporter complex BtuCDF involved in vitamin B12 import. Responsible for energy coupling to the transport system. This is Vitamin B12 import ATP-binding protein BtuD from Citrobacter koseri (strain ATCC BAA-895 / CDC 4225-83 / SGSC4696).